Consider the following 644-residue polypeptide: Protein cueball (644 aa).

The first 26 residues, 1–26, serve as a signal peptide directing secretion; it reads MIRIRFGMDVLLVLLLATCLLSPTHG. The Extracellular portion of the chain corresponds to 27–531; sequence TPLEWDFAVT…VCLTPTVWTS (505 aa). N82 and N108 each carry an N-linked (GlcNAc...) asparagine glycan. LDL-receptor class B repeat units follow at residues 121 to 166, 167 to 211, and 212 to 257; these read TNLF…DVCR, RKLY…DQLS, and DRLF…TNDA. N-linked (GlcNAc...) asparagine glycans are attached at residues N175 and N190. An N-linked (GlcNAc...) asparagine glycan is attached at N313. 2 consecutive EGF-like domains span residues 398–430 and 433–471; these read EIRE…FTGE and EVSV…ARCE. 5 disulfide bridges follow: C402–C411, C406–C421, C437–C447, C441–C459, and C461–C470. N473 and N508 each carry an N-linked (GlcNAc...) asparagine glycan. A helical membrane pass occupies residues 532–552; sequence SVIIILVVGIVSSLLLVAVIV. The Cytoplasmic portion of the chain corresponds to 553-644; the sequence is HGIRRLYKPK…LIHNMEDDLY (92 aa).

This sequence belongs to the cueball family.

The protein resides in the cell membrane. Has a role in spermatogenesis and oogenesis. This is Protein cueball from Drosophila yakuba (Fruit fly).